A 273-amino-acid polypeptide reads, in one-letter code: HMP-PP phosphatase (273 aa).

Asp-8 acts as the Nucleophile in catalysis. Residues Asp-8, Asp-10, and Asp-212 each contribute to the Mg(2+) site.

The protein belongs to the HAD-like hydrolase superfamily. Cof family. Requires Mg(2+) as cofactor.

The enzyme catalyses 4-amino-2-methyl-5-(diphosphooxymethyl)pyrimidine + H2O = 4-amino-2-methyl-5-(phosphooxymethyl)pyrimidine + phosphate + H(+). Catalyzes the hydrolysis of 4-amino-2-methyl-5-hydroxymethylpyrimidine pyrophosphate (HMP-PP) to 4-amino-2-methyl-5-hydroxymethylpyrimidine phosphate (HMP-P). This chain is HMP-PP phosphatase, found in Yersinia pseudotuberculosis serotype O:1b (strain IP 31758).